The chain runs to 652 residues: DNA ligase (652 aa).

NAD(+) contacts are provided by residues 29 to 33 (DSEYD), 78 to 79 (SL), and Glu107. Residue Lys109 is the N6-AMP-lysine intermediate of the active site. NAD(+)-binding residues include Arg130, Glu164, Lys278, and Lys302. Zn(2+)-binding residues include Cys395, Cys398, Cys413, and Cys418. In terms of domain architecture, BRCT spans 577–652 (AADAALSGMT…IRDEDWLDSL (76 aa)).

The protein belongs to the NAD-dependent DNA ligase family. LigA subfamily. It depends on Mg(2+) as a cofactor. Requires Mn(2+) as cofactor.

The enzyme catalyses NAD(+) + (deoxyribonucleotide)n-3'-hydroxyl + 5'-phospho-(deoxyribonucleotide)m = (deoxyribonucleotide)n+m + AMP + beta-nicotinamide D-nucleotide.. In terms of biological role, DNA ligase that catalyzes the formation of phosphodiester linkages between 5'-phosphoryl and 3'-hydroxyl groups in double-stranded DNA using NAD as a coenzyme and as the energy source for the reaction. It is essential for DNA replication and repair of damaged DNA. This is DNA ligase from Streptococcus sanguinis (strain SK36).